A 143-amino-acid polypeptide reads, in one-letter code: Small ribosomal subunit protein uS11c (143 aa).

It belongs to the universal ribosomal protein uS11 family. In terms of assembly, part of the 30S ribosomal subunit.

Its subcellular location is the plastid. The protein resides in the chloroplast. The polypeptide is Small ribosomal subunit protein uS11c (Brachypodium distachyon (Purple false brome)).